The primary structure comprises 239 residues: MRPSGRAADALRSISLTRHYTRHAEGSVLCAFGDTKVLCTASVLAKVPPHKKGSGEGWVTAEYGMLPRATHTRSDREAARGKQTGRTQEIQRLIGRAMRSVFDLAALGEYTLHLDCDVLQADGGTRTAAITGAFVAAHDAVATMLRDGLIAASPIRDHVAAVSVGMVDGVPVLDLDYAEDSNCDTDMNVVMTGSGGFVEVQGTAEGAPFSRADLDAMTRLAEAGIARLVQYQREALGLA.

Phosphate contacts are provided by residues Arg86 and 124–126; that span reads GTR.

The protein belongs to the RNase PH family. Homohexameric ring arranged as a trimer of dimers.

It catalyses the reaction tRNA(n+1) + phosphate = tRNA(n) + a ribonucleoside 5'-diphosphate. Functionally, phosphorolytic 3'-5' exoribonuclease that plays an important role in tRNA 3'-end maturation. Removes nucleotide residues following the 3'-CCA terminus of tRNAs; can also add nucleotides to the ends of RNA molecules by using nucleoside diphosphates as substrates, but this may not be physiologically important. Probably plays a role in initiation of 16S rRNA degradation (leading to ribosome degradation) during starvation. The protein is Ribonuclease PH of Cupriavidus taiwanensis (strain DSM 17343 / BCRC 17206 / CCUG 44338 / CIP 107171 / LMG 19424 / R1) (Ralstonia taiwanensis (strain LMG 19424)).